Here is a 165-residue protein sequence, read N- to C-terminus: Methylated-DNA--protein-cysteine methyltransferase (165 aa).

The active-site Nucleophile; methyl group acceptor is cysteine 126.

The protein belongs to the MGMT family.

Its subcellular location is the cytoplasm. It catalyses the reaction a 6-O-methyl-2'-deoxyguanosine in DNA + L-cysteinyl-[protein] = S-methyl-L-cysteinyl-[protein] + a 2'-deoxyguanosine in DNA. It carries out the reaction a 4-O-methyl-thymidine in DNA + L-cysteinyl-[protein] = a thymidine in DNA + S-methyl-L-cysteinyl-[protein]. Functionally, involved in the cellular defense against the biological effects of O6-methylguanine (O6-MeG) and O4-methylthymine (O4-MeT) in DNA. Repairs the methylated nucleobase in DNA by stoichiometrically transferring the methyl group to a cysteine residue in the enzyme. This is a suicide reaction: the enzyme is irreversibly inactivated. The polypeptide is Methylated-DNA--protein-cysteine methyltransferase (Mycolicibacterium paratuberculosis (strain ATCC BAA-968 / K-10) (Mycobacterium paratuberculosis)).